Consider the following 84-residue polypeptide: Toxin Acra3 (84 aa).

The signal sequence occupies residues 1 to 17; it reads MKIIFLVLMMILSEVYS. An LCN-type CS-alpha/beta domain is found at 19 to 82; it reads RDGYPVHDGT…VYGDDGIFCK (64 aa). 4 disulfide bridges follow: Cys-30-Cys-81, Cys-34-Cys-57, Cys-43-Cys-62, and Cys-47-Cys-64. Residue Ser-83 is modified to Serine amide.

The protein belongs to the long (4 C-C) scorpion toxin superfamily. Sodium channel inhibitor family. Beta subfamily. Expressed by the venom gland.

It localises to the secreted. Toxin with unknown target. In vivo, induces severe neurotoxic events in mice such as excitability and convulsions, leading to the death of the animals within a few minutes after injection. Exerts very strong cytotoxic effect on a mouse brain tumor cell line (BC3H1) (IC(50)=5 mg/ml). It exerts its effects by inducing a stronger necrosis than apoptosis in BC3H1 cells. This Androctonus crassicauda (Arabian fat-tailed scorpion) protein is Toxin Acra3.